Reading from the N-terminus, the 130-residue chain is Small ribosomal subunit protein uS9 (130 aa).

The protein belongs to the universal ribosomal protein uS9 family.

This Neisseria gonorrhoeae (strain ATCC 700825 / FA 1090) protein is Small ribosomal subunit protein uS9.